A 1898-amino-acid polypeptide reads, in one-letter code: MAPEPAPGRRMVPLVPALVMLGLMAGAHGDSKPVFVKVPEDQTGLSGGVASFVCQATGEPKPRITWMKKGKKVSSQRFEVIEFDDGAGSVLRIQPLRVQRDEAIYECTATNSLGEINTSAKLSVLEEDQLPSGFPTIDMGPQLKVVEKGRTATMLCAAGGNPDPEISWFKDFLPVDPAASNGRIKQLRSGALQIESSEESDQGKYECVATNSAGTRYSAPANLYVRVRRVAPRFSIPPSSQEVMPGGSVNLTCVAVGAPMPYVKWMMGAEELTKEDEMPVGRNVLELSNVMRSANYTCVAISSLGMIEATAQVTVKALPKPPIDLVVTETTATSVTLTWDSGNTEPVSFYGIQYRAAGTDGPFQEVDGVASTRYSIGGLSPFSEYAFRVLAVNSIGRGPPSEAVRARTGEQAPSSPPRRVQARMLSASTMLVQWEPPEEPNGLVRGYRVYYTPDSRRPLSAWHKHNTDAGLLTTVGSLLPGITYSLRVLAFTAVGDGPPSPTIQVKTQQGVPAQPADFQANAESDTRIQLSWLLPPQERIVKYELVYWAAEDEGQQHKVTFDPTSSYTLEDLKPDTLYHFQLAARSDLGVGVFTPTVEARTAQSTPSAPPQKVTCVSTGSTTVRVSWVPPPADSRNGIITQYSVAYEAVDGEDRKRHVVDGISREHSSWDLLGLEKWTEYRVWVRAHTDVGPGPESSPVLVRTDEDVPSGPPRKVEVEPLNSTAVHVSWKLPVPNKQHGQIRGYQVTYVRLENGEPRGQPIIQDVMLAEAQETTISGLTPETTYSITVAAYTTKGDGARSKPKVVTTTGAVPGRPTMMVSTTAMHTALLQWHPPKELPGELLGYRLQYRRADEARPNTIDFGKDDQHFTVTGLHKGATYVFRLAAKNRAGPGEEFEKEITTPEDVPSGFPQNLRVTGLTTSTTELTWDPPVLAERNGHITNYTVVYRDINSQLELQNVTNDTHLTLLGLKPDTTYDIKVRAHTSKGAGPLSPSIQSRTMPVEQVFAKNFRVAAAMKTSVLLSWEVPDSYKSAVPFKILYNGQSVEVDGHSMRKLIADLQPNTEYSFVLMNRGSSAGGLQHLVSIRTAPDLLPQKPLPASAFIEDGRFSLSMPQVQDPSLVRWFYIVVVPIDRVGGNLLAPRWNTPEELELDELLEAIEQGEEKQRRRRRQAERLKPYVAAQVDVLPDTFTLGDKKSYRGFYNRPLSPDLSYQCFVLASLKEPMDQKRYASSPYSDEIVVQVTPAQQQEEPEMLWVTGPVLAVILIILIVIAILLFKRKRTHSPSSKDEQSIGLKDSLLAHSSDPVEMRRLNYQTPGMRDHPPIPITDLADNIERLKANDGLKFSQEYESIDPGQQFTWENSNSEVNKPKNRYANVIAYDHSRVLLTSIDGVPGSDYINANYIDGYRKQNAYIATQGPLPETMGDFWRMVWEQRTATVVMMTRLEEKSRVKCDQYWPVRGTETYGLIQVTLVDTVELATYTMRTFALHKSGSSEKRELRQFQFMAWPDHGVPEYPTPILAFLRRVKACNPLDAGPMVVHCSAGVGRTGCFIVIDAMLERMKHEKTVDIYGHVTCMRSQRNYMVQTEDQYVFIHEALLEAAMCGHTEVLARNLYAHIQKLGQVPPGESVTAMELEFKLLANSKAHTSRFVSANLPCNKFKNRLVNIMPYELTRVCLQPIRGVEGSDYINASFLDGYRQQKAYIATQGPLAESTEDFWRMLWEHNSTIIVMLTKLREMGREKCHQYWPAERSARYQYFVVDPMAEYNMPQYILREFKVTDARDGQSRTIRQFQFTDWPEQGVPKTGEGFIDFIGQVHKTKEQFGQDGPITVHCSAGVGRTGVFITLSIVLERMRYEGVVDMFQTVKTLRTQRPAMVQTEDQYQLCYRAALEYLGSFDHYAT.

The N-terminal stretch at 1-29 (MAPEPAPGRRMVPLVPALVMLGLMAGAHG) is a signal peptide. The Extracellular segment spans residues 30-1254 (DSKPVFVKVP…QQQEEPEMLW (1225 aa)). Ig-like C2-type domains are found at residues 33–123 (PVFV…AKLS), 135–224 (PTID…ANLY), and 232–314 (PRFS…AQVT). A disulfide bridge links C54 with C107. Heparin is bound at residue 68–77 (KKGKKVSSQR). N-linked (GlcNAc...) asparagine glycosylation is present at N117. A disulfide bridge links C156 with C207. N-linked (GlcNAc...) asparagine glycosylation is found at N250 and N295. The cysteines at positions 253 and 298 are disulfide-linked. 8 consecutive Fibronectin type-III domains span residues 321-411 (PPID…TGEQ), 416-510 (PPRR…TQQG), 514-604 (QPAD…TAQS), 609-706 (PPQK…TDED), 711-810 (PPRK…TTGA), 811-904 (VPGR…TPED), 909-1001 (FPQN…TMPV), and 1005-1089 (FAKN…TAPD). A disordered region spans residues 693–712 (GPESSPVLVRTDEDVPSGPP). N-linked (GlcNAc...) asparagine glycosylation is present at N721. N-linked (GlcNAc...) asparagine glycans are attached at residues N941, N957, and N960. The helical transmembrane segment at 1255 to 1275 (VTGPVLAVILIILIVIAILLF) threads the bilayer. The Cytoplasmic segment spans residues 1276–1898 (KRKRTHSPSS…YLGSFDHYAT (623 aa)). S1296 carries the post-translational modification Phosphoserine. 2 consecutive Tyrosine-protein phosphatase domains span residues 1343 to 1598 (FSQE…LLEA) and 1630 to 1889 (MELE…ALEY). Substrate is bound by residues D1507, 1539–1545 (CSAGVGR), and Q1583. Residue C1539 is the Phosphocysteine intermediate of the active site. The Phosphocysteine intermediate role is filled by C1830.

The protein belongs to the protein-tyrosine phosphatase family. Receptor class 2A subfamily. As to quaternary structure, interacts with GRIP1. Interacts with PPFIA1, PPFIA2 and PPFIA3. Interacts with PTPRF. As to expression, expressed in the cell of the T lineage but not in cells of any other hemopoietic lineage.

It is found in the membrane. It catalyses the reaction O-phospho-L-tyrosyl-[protein] + H2O = L-tyrosyl-[protein] + phosphate. Functionally, possible cell adhesion receptor. It possesses an intrinsic protein tyrosine phosphatase activity (PTPase) and dephosphorylates EPHA2 regulating its activity. This Mus musculus (Mouse) protein is Receptor-type tyrosine-protein phosphatase F (Ptprf).